The following is a 367-amino-acid chain: Ribosomal lysine N-methyltransferase 5 (367 aa).

The segment at 55–74 (EGGRKKKRVRRRNKASSVEE) is disordered. Over residues 58–68 (RKKKRVRRRNK) the composition is skewed to basic residues. Residues Trp110, 170–172 (GAG), Asp192, Trp256, and Met288 each bind S-adenosyl-L-methionine.

Belongs to the class I-like SAM-binding methyltransferase superfamily. RKM5 family.

Functionally, S-adenosyl-L-methionine-dependent protein-lysine N-methyltransferase that monomethylates 60S ribosomal protein L1 (RPL1A and RPL1B) at 'Lys-46'. The protein is Ribosomal lysine N-methyltransferase 5 (RKM5) of Saccharomyces cerevisiae (strain Lalvin EC1118 / Prise de mousse) (Baker's yeast).